Here is a 335-residue protein sequence, read N- to C-terminus: Holliday junction branch migration complex subunit RuvB (335 aa).

Residues 1–181 (MDRIVEIEKY…FGMQFRLEFY (181 aa)) form a large ATPase domain (RuvB-L) region. An ATP-binding site is contributed by L20. ADP-binding residues include R21, Y28, I29, G62, L63, G64, K65, T66, and T67. Residues 128–130 (EDY) and R171 each bind ATP. Residues Y181 and R218 each contribute to the ADP site. The segment at 182-252 (KDSELALILQ…RANEALNSLG (71 aa)) is small ATPAse domain (RuvB-S). The segment at 255-335 (ELGFDAMDLR…LNYEKTLFEE (81 aa)) is head domain (RuvB-H). The DNA site is built by R309 and R314.

It belongs to the RuvB family. In terms of assembly, homohexamer. Forms an RuvA(8)-RuvB(12)-Holliday junction (HJ) complex. HJ DNA is sandwiched between 2 RuvA tetramers; dsDNA enters through RuvA and exits via RuvB. An RuvB hexamer assembles on each DNA strand where it exits the tetramer. Each RuvB hexamer is contacted by two RuvA subunits (via domain III) on 2 adjacent RuvB subunits; this complex drives branch migration. In the full resolvosome a probable DNA-RuvA(4)-RuvB(12)-RuvC(2) complex forms which resolves the HJ.

It is found in the cytoplasm. The catalysed reaction is ATP + H2O = ADP + phosphate + H(+). The RuvA-RuvB-RuvC complex processes Holliday junction (HJ) DNA during genetic recombination and DNA repair, while the RuvA-RuvB complex plays an important role in the rescue of blocked DNA replication forks via replication fork reversal (RFR). RuvA specifically binds to HJ cruciform DNA, conferring on it an open structure. The RuvB hexamer acts as an ATP-dependent pump, pulling dsDNA into and through the RuvAB complex. RuvB forms 2 homohexamers on either side of HJ DNA bound by 1 or 2 RuvA tetramers; 4 subunits per hexamer contact DNA at a time. Coordinated motions by a converter formed by DNA-disengaged RuvB subunits stimulates ATP hydrolysis and nucleotide exchange. Immobilization of the converter enables RuvB to convert the ATP-contained energy into a lever motion, pulling 2 nucleotides of DNA out of the RuvA tetramer per ATP hydrolyzed, thus driving DNA branch migration. The RuvB motors rotate together with the DNA substrate, which together with the progressing nucleotide cycle form the mechanistic basis for DNA recombination by continuous HJ branch migration. Branch migration allows RuvC to scan DNA until it finds its consensus sequence, where it cleaves and resolves cruciform DNA. The chain is Holliday junction branch migration complex subunit RuvB from Campylobacter jejuni subsp. jejuni serotype O:2 (strain ATCC 700819 / NCTC 11168).